A 278-amino-acid polypeptide reads, in one-letter code: Tryptophan 2,3-dioxygenase (278 aa).

Residues 47–51 (FIIQH), Tyr-110, and Arg-114 each bind substrate. His-236 is a binding site for heme. A substrate-binding site is contributed by Thr-250.

Belongs to the tryptophan 2,3-dioxygenase family. As to quaternary structure, homotetramer. Requires heme as cofactor.

It catalyses the reaction L-tryptophan + O2 = N-formyl-L-kynurenine. It functions in the pathway amino-acid degradation; L-tryptophan degradation via kynurenine pathway; L-kynurenine from L-tryptophan: step 1/2. In terms of biological role, heme-dependent dioxygenase that catalyzes the oxidative cleavage of the L-tryptophan (L-Trp) pyrrole ring and converts L-tryptophan to N-formyl-L-kynurenine. Catalyzes the oxidative cleavage of the indole moiety. This is Tryptophan 2,3-dioxygenase from Ruegeria pomeroyi (strain ATCC 700808 / DSM 15171 / DSS-3) (Silicibacter pomeroyi).